The sequence spans 560 residues: 2-hydroxyacyl-CoA lyase (560 aa).

E49 is a binding site for thiamine diphosphate. Residues D446 and N473 each contribute to the Mg(2+) site. A Peroxisomal target signal 1 (PTS1) motif is present at residues 558-560 (PRL).

The protein belongs to the TPP enzyme family. The cofactor is Mg(2+). Thiamine diphosphate serves as cofactor.

Its subcellular location is the cytoplasm. It is found in the peroxisome matrix. It carries out the reaction an (R)-2-hydroxy-long-chain-fatty acyl-CoA = a long-chain fatty aldehyde + formyl-CoA. The catalysed reaction is a 2-hydroxy-3-methyl fatty acyl-CoA = a 2-methyl-branched fatty aldehyde + formyl-CoA. In terms of biological role, catalyzes a carbon-carbon cleavage reaction; cleaves a 2-hydroxy-3-methylacyl-CoA into formyl-CoA and a 2-methyl-branched fatty aldehyde. In Saccharomyces cerevisiae (strain ATCC 204508 / S288c) (Baker's yeast), this protein is 2-hydroxyacyl-CoA lyase.